A 338-amino-acid polypeptide reads, in one-letter code: Anthranilate phosphoribosyltransferase (338 aa).

5-phospho-alpha-D-ribose 1-diphosphate contacts are provided by residues glycine 81, 84 to 85, threonine 89, 91 to 94, 109 to 117, and alanine 121; these read GD, NVST, and KHGNRALSS. An anthranilate-binding site is contributed by glycine 81. Residue serine 93 coordinates Mg(2+). Position 112 (asparagine 112) interacts with anthranilate. Arginine 167 is an anthranilate binding site. Residues aspartate 225 and glutamate 226 each contribute to the Mg(2+) site.

It belongs to the anthranilate phosphoribosyltransferase family. As to quaternary structure, homodimer. It depends on Mg(2+) as a cofactor.

It catalyses the reaction N-(5-phospho-beta-D-ribosyl)anthranilate + diphosphate = 5-phospho-alpha-D-ribose 1-diphosphate + anthranilate. The protein operates within amino-acid biosynthesis; L-tryptophan biosynthesis; L-tryptophan from chorismate: step 2/5. Functionally, catalyzes the transfer of the phosphoribosyl group of 5-phosphorylribose-1-pyrophosphate (PRPP) to anthranilate to yield N-(5'-phosphoribosyl)-anthranilate (PRA). The protein is Anthranilate phosphoribosyltransferase of Chelativorans sp. (strain BNC1).